Reading from the N-terminus, the 700-residue chain is Dipeptidyl aminopeptidase 1 (700 aa).

The N-terminal stretch at 1 to 27 (MAKRIFSVSFLLVLLNVLHICIKFSVA) is a signal peptide. 5 N-linked (GlcNAc...) asparagine glycosylation sites follow: asparagine 52, asparagine 144, asparagine 265, asparagine 337, and asparagine 373. Residues 210–369 (DNVNEIKHLD…SPKRELEINE (160 aa)) constitute a propeptide that is removed on maturation. 2 cysteine pairs are disulfide-bonded: cysteine 395/cysteine 446 and cysteine 439/cysteine 478. Residue cysteine 398 is part of the active site. The residue at position 416 (threonine 416) is a Sulfothreonine. Positions 450 and 452 each coordinate chloride. Asparagine 481, asparagine 490, and asparagine 507 each carry an N-linked (GlcNAc...) asparagine glycan. Tyrosine 549 lines the chloride pocket. The N-linked (GlcNAc...) asparagine glycan is linked to asparagine 615. Catalysis depends on residues histidine 624 and asparagine 648. Asparagine 667 carries an N-linked (GlcNAc...) asparagine glycan.

The protein belongs to the peptidase C1 family. As to quaternary structure, monomer. Requires chloride as cofactor.

The protein localises to the vacuole lumen. It localises to the parasitophorous vacuole lumen. It catalyses the reaction Release of an N-terminal dipeptide, Xaa-Yaa-|-Zaa-, except when Xaa is Arg or Lys, or Yaa or Zaa is Pro.. Its function is as follows. Thiol protease that cleaves dipeptides from the N-terminus of protein substrates. Active against a broad range of dipeptide substrates composed of both polar and hydrophobic amino acids. Proline cannot occupy the P1 position and arginine or lysine cannot occupy the P2 position of the substrate. Involved in host hemoglobin degradation by generating dipeptides from hemoglobin-derived oligopeptides. This Plasmodium falciparum (isolate 3D7) protein is Dipeptidyl aminopeptidase 1.